We begin with the raw amino-acid sequence, 444 residues long: MREILHIQGGQCGNQIGAKFWEVICGEHGIDQTGQSCGDTDLQLERINVYFNEASGGKYVPRAVLMDLEPGTMDSLRSGPFGQIFRPDNFVFGQSGAGNNWAKGHYTEGAELIDSVLDVVRKEAENCDCLQGFQVCHSLGGGTGSGMGTLLISKIREEYPDRMMMTFSVFPSPKVSDTVVEPYNATLSVHQLVENADECMVLDNEALYDICFRTLKLANPTFGDLNHLISATMSGVTCCLRFPGQLNSDLRKLAVNLIPFPRLHFFMVGFAPLTSRGSQQYSALSVPELTQQMWDAKNMMCAADPRHGRYLTASAVFRGKMSTKEVDEQMMNVQNKNSSYFVEWIPNNVKSSVCDIAPTGLKMASTFIGNSTSIQEMFRRVSEQFTAMFRRKAFLHWYTGEGMDEMEFTEAESNMNDLVAEYQQYQDATVGEEEYEEDEEEEEA.

Gln11, Glu69, Ser138, Gly142, Thr143, Gly144, Asn204, and Asn226 together coordinate GTP. Glu69 contributes to the Mg(2+) binding site.

The protein belongs to the tubulin family. Dimer of alpha and beta chains. A typical microtubule is a hollow water-filled tube with an outer diameter of 25 nm and an inner diameter of 15 nM. Alpha-beta heterodimers associate head-to-tail to form protofilaments running lengthwise along the microtubule wall with the beta-tubulin subunit facing the microtubule plus end conferring a structural polarity. Microtubules usually have 13 protofilaments but different protofilament numbers can be found in some organisms and specialized cells. Interacts with TFCA. Mg(2+) serves as cofactor.

It localises to the cytoplasm. It is found in the cytoskeleton. Functionally, tubulin is the major constituent of microtubules, a cylinder consisting of laterally associated linear protofilaments composed of alpha- and beta-tubulin heterodimers. Microtubules grow by the addition of GTP-tubulin dimers to the microtubule end, where a stabilizing cap forms. Below the cap, tubulin dimers are in GDP-bound state, owing to GTPase activity of alpha-tubulin. The polypeptide is Tubulin beta-9 chain (TUBB9) (Arabidopsis thaliana (Mouse-ear cress)).